A 76-amino-acid polypeptide reads, in one-letter code: Peptide ARACIN 1 (76 aa).

The first 22 residues, M1–A22, serve as a signal peptide directing secretion. The propeptide at R23–P35 is removed in mature form. The SxS motif essential for MIK2 binding motif lies at S36–S38. Residues S36 to S49 carry the SCOOP motif motif. A disordered region spans residues A56–P76. The segment covering L64–P76 has biased composition (polar residues).

This sequence belongs to the serine rich endogenous peptide (SCOOP) phytocytokine family. Interacts with MIK2 (via extracellular leucine-rich repeat domain); this interaction triggers the formation of complex between MIK2 and the BAK1/SERK3 and SERK4 coreceptors, and subsequent BAK1 activation by phosphorylation. Mainly expressed in young developing leaves, hydathodes, immature flowers and elongating pollen tubes.

The protein resides in the cell membrane. The protein localises to the secreted. It is found in the extracellular space. It localises to the apoplast. Its subcellular location is the endoplasmic reticulum. Brassicaceae-specific phytocytokine (plant endogenous peptide released into the apoplast) perceived by MIK2 in a BAK1/SERK3 and SERK4 coreceptors-dependent manner, that modulates various physiological and antimicrobial processes including growth prevention and reactive oxygen species (ROS) response regulation. Inhibits the fungal growth of Alternaria brassicicola, Sclerotinia sclerotiorum, Fusarium graminearum, yeast (Saccharomyces) and Botrytis cinerea, thus being an antimicrobial peptide (AMP). Promotes resistance to A.brassicicola and B.cinerea. This chain is Peptide ARACIN 1, found in Arabidopsis thaliana (Mouse-ear cress).